The sequence spans 71 residues: Exodeoxyribonuclease 7 small subunit (71 aa).

This sequence belongs to the XseB family. In terms of assembly, heterooligomer composed of large and small subunits.

The protein resides in the cytoplasm. It catalyses the reaction Exonucleolytic cleavage in either 5'- to 3'- or 3'- to 5'-direction to yield nucleoside 5'-phosphates.. Bidirectionally degrades single-stranded DNA into large acid-insoluble oligonucleotides, which are then degraded further into small acid-soluble oligonucleotides. This Clostridium botulinum (strain ATCC 19397 / Type A) protein is Exodeoxyribonuclease 7 small subunit.